The sequence spans 156 residues: Ribosomal RNA large subunit methyltransferase H (156 aa).

S-adenosyl-L-methionine contacts are provided by residues L73, G104, and 123 to 128; that span reads VSSLTL.

This sequence belongs to the RNA methyltransferase RlmH family. As to quaternary structure, homodimer.

It localises to the cytoplasm. The enzyme catalyses pseudouridine(1915) in 23S rRNA + S-adenosyl-L-methionine = N(3)-methylpseudouridine(1915) in 23S rRNA + S-adenosyl-L-homocysteine + H(+). Specifically methylates the pseudouridine at position 1915 (m3Psi1915) in 23S rRNA. The sequence is that of Ribosomal RNA large subunit methyltransferase H from Paraburkholderia phytofirmans (strain DSM 17436 / LMG 22146 / PsJN) (Burkholderia phytofirmans).